Consider the following 475-residue polypeptide: MDTETIASAVLNEEQLSLDLIEAQYALMNTRDQSNAKSLVILVSGIELAGKGEAVKQLREWVDPRFLYVKADPPHLFNLKQPFWQPYTRFVPAEGQIMVWFGNWYGDLLATAMHASKPLDDTLFDEYVSNMRAFEQDLKNNNVDVLKVWFDLSWKSLQKRLDDMDPSEVHWHKLHGLDWRNKKQYDTLQKLRTRFTDDWQIIDGEDEDLRNHNFAQAILTALRHCPEHEKKAALKWQQAPIPDILTQFEVPQAEDANYKSELKKLTKQVADAMRCDDRKVVIAFEGMDAAGKGGAIKRIVKKLDPREYEIHTIAAPEKYELRRPYLWRFWSKLQSDDITIFDRTWYGRVLVERVEGFATEVEWQRAYAEINRFEKNLSSSQTVLIKFWLAIDKDEQAARFKARESTPHKRFKITEEDWRNRDKWDDYLKAAADMFAHTDTSYAPWYIISTNDKQQARIEVLRAILKQLKADRDTD.

2 PPK2 regions span residues 18-222 (LDLI…LTAL) and 256-472 (ANYK…KADR).

It belongs to the polyphosphate kinase 2 (PPK2) family. Class II subfamily. Homodimer and homotetramer. Mg(2+) is required as a cofactor.

The enzyme catalyses [phosphate](n) + ADP = [phosphate](n+1) + AMP. Uses inorganic polyphosphate (polyP) as a donor to convert AMP to ADP. Can also use GMP, UMP, CMP, TMP or deoxyribonucleoside monophosphates, with lower efficiency. Cannot use low-molecular weight polyP as donors. Can also catalyze the synthesis of polyP from ADP or GDP, with lower efficiency. The sequence is that of Polyphosphate:AMP phosphotransferase from Acinetobacter johnsonii.